Consider the following 75-residue polypeptide: Protein SlyX homolog (75 aa).

The protein belongs to the SlyX family.

This is Protein SlyX homolog from Chromobacterium violaceum (strain ATCC 12472 / DSM 30191 / JCM 1249 / CCUG 213 / NBRC 12614 / NCIMB 9131 / NCTC 9757 / MK).